The sequence spans 123 residues: Large ribosomal subunit protein uL24 (123 aa).

This sequence belongs to the universal ribosomal protein uL24 family. Part of the 50S ribosomal subunit.

In terms of biological role, one of two assembly initiator proteins, it binds directly to the 5'-end of the 23S rRNA, where it nucleates assembly of the 50S subunit. Functionally, located at the polypeptide exit tunnel on the outside of the subunit. The protein is Large ribosomal subunit protein uL24 of Pyrobaculum islandicum (strain DSM 4184 / JCM 9189 / GEO3).